The chain runs to 1071 residues: Exportin-1 (1071 aa).

Residues 1-679 form a necessary for HTLV-1 Rex-mediated mRNA export region; the sequence is MPAIMTMLAD…QQATKNVDIL (679 aa). In terms of domain architecture, Importin N-terminal spans 46 to 112; that stretch reads AQEVLTHLKE…KKYVVGLIIK (67 aa). 6 HEAT repeats span residues 217–240, 241–277, 354–472, 515–553, 560–597, and 602–639; these read QNAP…PLGY, IFET…VSVS, MLLV…YVDT, RFLV…QYPR, KFLK…KCRR, and VQVG…AVGY. Positions 327 to 450 are interaction with Ran and nuclear export complex formation; it reads CTFLKEHDQL…VREFMKDTDS (124 aa). Ser391 carries the post-translational modification Phosphoserine. The tract at residues 411–414 is necessary for HTLV-1 Rex multimerization; it reads PMLF. The interval 411-481 is interaction with RANBP3; it reads PMLFKVRLLM…TERIMTEKLH (71 aa). Lys446 is modified (N6-acetyllysine). Position 448 is a phosphothreonine (Thr448). Ser450 bears the Phosphoserine mark. At Tyr454 the chain carries Phosphotyrosine. Lys693 carries the post-translational modification N6-acetyllysine. HEAT repeat units lie at residues 775-813, 885-916, 917-954, and 1002-1039; these read NFVP…KLGG, TMRN…SFYQ, TYFC…NLVE, and FSLN…EERE. An interaction with HIV-1 Rev region spans residues 800–820; sequence VLSTMAIIVNKLGGHITAEIP. A Phosphoserine modification is found at Ser1031.

Belongs to the exportin family. In terms of assembly, found in a U snRNA export complex with PHAX/RNUXA, NCBP1/CBP80, NCBP2/CBP20, RAN, XPO1 and m7G-capped RNA. Component of a nuclear export receptor complex composed of KPNB1, RAN, SNUPN and XPO1. Found in a trimeric export complex with SNUPN, RAN and XPO1. Found in a nuclear export complex with RANBP3 and RAN. Found in a 60S ribosomal subunit export complex with NMD3, RAN, XPO1. Interacts with DDX3X, NMD3, NUP42, NUP88, NUP214, RANBP3 and TERT. Interacts with NEMF (via its N-terminus). Interacts with the monomeric form of BIRC5/survivin deacetylated at 'Lys-129'. Interacts with DTNBP1 and SERTAD2; the interactions translocate DTNBP1 and SERTAD2 out of the nucleus. Interacts with ATF2. Interacts with SLC35G1 and STIM1. Interacts with DCAF8. Interacts with CPEB3. Interacts with HAX1. Interacts with BOK; translocates to the cytoplasm. Interacts with HSP90AB1. Interacts with LRPPRC; interacts with LRPPRC alone and also when LRPPRC is in complex with EIF4E and with EIF4E sensitivity element (4ESE)-containing mRNAs to form an EIF4E-dependent mRNA export complex. As to quaternary structure, (Microbial infection) Interacts with HIV-1 Rev. (Microbial infection) Interacts with HTLV-1 Rex. In terms of assembly, (Microbial infection) Interacts with influenza A nucleoprotein. As to quaternary structure, (Microbial infection) Interacts with Epstein-Barr virus protein BMLF1. (Microbial infection) Part of a tetrameric complex composed of CRM1, importin alpha/beta dimer and the Venezuelan equine encephalitis virus (VEEV) capsid; this complex blocks the receptor-mediated transport through the nuclear pore. In terms of assembly, (Microbial infection) Interacts with SARS-CoV virus protein ORF9b; this interaction mediates protein ORF9b export out of the nucleus. In terms of tissue distribution, expressed in heart, brain, placenta, lung, liver, skeletal muscle, pancreas, spleen, thymus, prostate, testis, ovary, small intestine, colon and peripheral blood leukocytes. Not expressed in the kidney.

Its subcellular location is the cytoplasm. The protein localises to the nucleus. It localises to the nucleoplasm. It is found in the cajal body. The protein resides in the nucleolus. In terms of biological role, mediates the nuclear export of cellular proteins (cargos) bearing a leucine-rich nuclear export signal (NES) and of RNAs. In the nucleus, in association with RANBP3, binds cooperatively to the NES on its target protein and to the GTPase RAN in its active GTP-bound form (Ran-GTP). Docking of this complex to the nuclear pore complex (NPC) is mediated through binding to nucleoporins. Upon transit of a nuclear export complex into the cytoplasm, disassembling of the complex and hydrolysis of Ran-GTP to Ran-GDP (induced by RANBP1 and RANGAP1, respectively) cause release of the cargo from the export receptor. The directionality of nuclear export is thought to be conferred by an asymmetric distribution of the GTP- and GDP-bound forms of Ran between the cytoplasm and nucleus. Involved in U3 snoRNA transport from Cajal bodies to nucleoli. Binds to late precursor U3 snoRNA bearing a TMG cap. (Microbial infection) Mediates the export of unspliced or incompletely spliced RNAs out of the nucleus from different viruses including HIV-1, HTLV-1 and influenza A. Interacts with, and mediates the nuclear export of HIV-1 Rev and HTLV-1 Rex proteins. Involved in HTLV-1 Rex multimerization. The chain is Exportin-1 (XPO1) from Homo sapiens (Human).